The primary structure comprises 444 residues: Methylenetetrahydrofolate--tRNA-(uracil-5-)-methyltransferase TrmFO (444 aa).

An FAD-binding site is contributed by 10-15 (GAGLAG).

This sequence belongs to the MnmG family. TrmFO subfamily. It depends on FAD as a cofactor.

The protein localises to the cytoplasm. The catalysed reaction is uridine(54) in tRNA + (6R)-5,10-methylene-5,6,7,8-tetrahydrofolate + NADH + H(+) = 5-methyluridine(54) in tRNA + (6S)-5,6,7,8-tetrahydrofolate + NAD(+). It carries out the reaction uridine(54) in tRNA + (6R)-5,10-methylene-5,6,7,8-tetrahydrofolate + NADPH + H(+) = 5-methyluridine(54) in tRNA + (6S)-5,6,7,8-tetrahydrofolate + NADP(+). Functionally, catalyzes the folate-dependent formation of 5-methyl-uridine at position 54 (M-5-U54) in all tRNAs. The chain is Methylenetetrahydrofolate--tRNA-(uracil-5-)-methyltransferase TrmFO from Streptococcus equi subsp. equi (strain 4047).